The following is a 244-amino-acid chain: DNA repair protein RecO (244 aa).

This sequence belongs to the RecO family.

Involved in DNA repair and RecF pathway recombination. In Caldicellulosiruptor saccharolyticus (strain ATCC 43494 / DSM 8903 / Tp8T 6331), this protein is DNA repair protein RecO.